A 308-amino-acid chain; its full sequence is Ribonuclease HIII (308 aa).

Residues 91 to 308 enclose the RNase H type-2 domain; the sequence is KNVIGSDEVG…TEKALKMVKK (218 aa). Residues Asp97, Glu98, and Asp202 each contribute to the a divalent metal cation site.

Belongs to the RNase HII family. RnhC subfamily. Mn(2+) serves as cofactor. Mg(2+) is required as a cofactor.

It localises to the cytoplasm. It catalyses the reaction Endonucleolytic cleavage to 5'-phosphomonoester.. In terms of biological role, endonuclease that specifically degrades the RNA of RNA-DNA hybrids. The sequence is that of Ribonuclease HIII from Listeria monocytogenes serotype 4b (strain F2365).